A 61-amino-acid polypeptide reads, in one-letter code: Large ribosomal subunit protein uL30 (61 aa).

The protein belongs to the universal ribosomal protein uL30 family. In terms of assembly, part of the 50S ribosomal subunit.

This Parafrankia sp. (strain EAN1pec) protein is Large ribosomal subunit protein uL30.